Reading from the N-terminus, the 270-residue chain is Cyclic pyranopterin monophosphate synthase, mitochondrial (270 aa).

The N-terminal 32 residues, 1–32 (MISTLRRAVFLRRFPAVVSPIKRAFSSRIDDE), are a transit peptide targeting the mitochondrion. Substrate is bound by residues 187 to 189 (LCH) and 225 to 226 (ME). Residue Asp240 is part of the active site.

It belongs to the MoaC family. In terms of assembly, homohexamer. As to expression, abundantly expressed in the roots.

It localises to the mitochondrion matrix. It catalyses the reaction (8S)-3',8-cyclo-7,8-dihydroguanosine 5'-triphosphate = cyclic pyranopterin phosphate + diphosphate. It functions in the pathway cofactor biosynthesis; molybdopterin biosynthesis. Catalyzes the conversion of (8S)-3',8-cyclo-7,8-dihydroguanosine 5'-triphosphate to cyclic pyranopterin monophosphate (cPMP). This Arabidopsis thaliana (Mouse-ear cress) protein is Cyclic pyranopterin monophosphate synthase, mitochondrial (CNX3).